A 360-amino-acid polypeptide reads, in one-letter code: Nucleoporin SEH1 (360 aa).

WD repeat units lie at residues 10–49 (DHKD…DWHC), 55–96 (THSG…SNDK), 111–152 (DSRT…NLSQ), 160–210 (SCKL…RKYA), 217–258 (SVSD…KELS), and 276–315 (NHNS…NWKC).

The protein belongs to the WD repeat SEC13 family. As to quaternary structure, component of the Nup107-160 subcomplex of the nuclear pore complex (NPC). The Nup107-160 subcomplex includes NUP160, NUP133, NUP107, NUP98, NUP85, NUP43, NUP37, SEH1 and SEC13. Component of the GATOR2 subcomplex, composed of MIOS, SEC13, SEH1L, WDR24 and WDR59. The GATOR2 complex interacts with CASTOR1 and CASTOR2; the interaction is negatively regulated by arginine. The GATOR2 complex interacts with SESN1, SESN2 and SESN3; the interaction is negatively regulated by amino acids.

It is found in the chromosome. It localises to the centromere. The protein resides in the kinetochore. The protein localises to the nucleus. Its subcellular location is the nuclear pore complex. It is found in the lysosome membrane. Its activity is regulated as follows. The GATOR2 complex is negatively regulated by the upstream amino acid sensors CASTOR1 and SESN2, which sequester the GATOR2 complex in absence of amino acids. In the presence of abundant amino acids, GATOR2 is released from CASTOR1 and SESN2 and activated. Component of the Nup107-160 subcomplex of the nuclear pore complex (NPC). The Nup107-160 subcomplex is required for the assembly of a functional NPC. The Nup107-160 subcomplex is also required for normal kinetochore microtubule attachment, mitotic progression and chromosome segregation. This subunit plays a role in recruitment of the Nup107-160 subcomplex to the kinetochore. Its function is as follows. As a component of the GATOR2 complex, functions as an activator of the amino acid-sensing branch of the mTORC1 signaling pathway. The GATOR2 complex indirectly activates mTORC1 through the inhibition of the GATOR1 subcomplex. GATOR2 probably acts as an E3 ubiquitin-protein ligase toward GATOR1. In the presence of abundant amino acids, the GATOR2 complex mediates ubiquitination of the NPRL2 core component of the GATOR1 complex, leading to GATOR1 inactivation. In the absence of amino acids, GATOR2 is inhibited, activating the GATOR1 complex. In Xenopus tropicalis (Western clawed frog), this protein is Nucleoporin SEH1 (seh1l).